A 399-amino-acid chain; its full sequence is Acetate kinase 2 (399 aa).

Asn-10 provides a ligand contact to Mg(2+). Residue Lys-17 coordinates ATP. Residue Arg-89 coordinates substrate. Catalysis depends on Asp-146, which acts as the Proton donor/acceptor. ATP is bound by residues 206-210 (HLGNG), 281-283 (DCR), and 329-333 (GIGEN). Glu-384 lines the Mg(2+) pocket.

It belongs to the acetokinase family. In terms of assembly, homodimer. Mg(2+) serves as cofactor. Requires Mn(2+) as cofactor.

It localises to the cytoplasm. It carries out the reaction acetate + ATP = acetyl phosphate + ADP. The protein operates within metabolic intermediate biosynthesis; acetyl-CoA biosynthesis; acetyl-CoA from acetate: step 1/2. Catalyzes the formation of acetyl phosphate from acetate and ATP. Can also catalyze the reverse reaction. This is Acetate kinase 2 from Neisseria meningitidis serogroup B (strain ATCC BAA-335 / MC58).